A 784-amino-acid chain; its full sequence is ent-copalyl diphosphate synthase 2, chloroplastic (784 aa).

Residues 1–57 (MSMTLFASVTRPGLPGPTALRFPETRHLFHSVTAFAASFSPSKSSVGSSQCNATTPP) constitute a chloroplast transit peptide. Lys242 is a binding site for substrate. 2 residues coordinate Mg(2+): Asp379 and Asp381. Residues 379-382 (DIDD) carry the DXDD motif motif. Lys466 contributes to the substrate binding site.

The protein belongs to the terpene synthase family. The cofactor is Mg(2+). In terms of tissue distribution, present in both leaves and flowers.

It is found in the plastid. Its subcellular location is the chloroplast. It functions in the pathway plant hormone biosynthesis; gibberellin biosynthesis. Its pathway is secondary metabolite biosynthesis; terpenoid biosynthesis. Involved in the biosynthesis of labdane-type diterpenoid including marrubiin and other labdane-related furanoid diterpenoids with potential applications as anti-diabetics, analgesics or vasorelaxants. May be involved in the conversion of geranylgeranyl diphosphate (GGPP) to ent-copalyl diphosphate (ent-CPP) and 8-hydroxycopalyl diphosphate (LPP, labda-13-en-8-ol diphosphate). This chain is ent-copalyl diphosphate synthase 2, chloroplastic, found in Marrubium vulgare (White horehound).